The following is a 50-amino-acid chain: Temporin-SHb (50 aa).

The first 10 residues, F1 to C10, serve as a signal peptide directing secretion. Residues E11–R35 constitute a propeptide that is removed on maturation. The segment at Q12–E31 is disordered. Positions R14–V30 are enriched in acidic residues. L48 carries the post-translational modification Leucine amide.

The protein belongs to the frog skin active peptide (FSAP) family. Temporin subfamily. As to expression, expressed by the skin glands.

It is found in the secreted. Functionally, amphipathic alpha-helical peptide with no antimicrobial activity. Does not display anti-leishmania activity. Does not show hemolytic activity (LC(50)&gt;116 uM). This Pelophylax saharicus (Sahara frog) protein is Temporin-SHb.